The chain runs to 296 residues: 4-hydroxybenzoate octaprenyltransferase (296 aa).

Helical transmembrane passes span 28-48 (IGTL…SDGI), 51-71 (LAVL…GCVI), 102-122 (LLLT…LNHL), 143-163 (FFPI…PMAF), 174-194 (AWIL…VYAM), 212-232 (FGRY…LLMA), 233-253 (VLGA…IVLL), and 274-294 (FLAN…HTFF).

It belongs to the UbiA prenyltransferase family. Mg(2+) is required as a cofactor.

The protein resides in the cell inner membrane. The catalysed reaction is all-trans-octaprenyl diphosphate + 4-hydroxybenzoate = 4-hydroxy-3-(all-trans-octaprenyl)benzoate + diphosphate. It functions in the pathway cofactor biosynthesis; ubiquinone biosynthesis. Its function is as follows. Catalyzes the prenylation of para-hydroxybenzoate (PHB) with an all-trans polyprenyl group. Mediates the second step in the final reaction sequence of ubiquinone-8 (UQ-8) biosynthesis, which is the condensation of the polyisoprenoid side chain with PHB, generating the first membrane-bound Q intermediate 3-octaprenyl-4-hydroxybenzoate. This is 4-hydroxybenzoate octaprenyltransferase from Neisseria meningitidis serogroup B (strain ATCC BAA-335 / MC58).